The sequence spans 374 residues: Aclacinomycin 10-hydroxylase RdmB (374 aa).

Positions 171, 190, 213, 240, 241, and 255 each coordinate S-adenosyl-L-methionine.

Belongs to the class I-like SAM-binding methyltransferase superfamily. Cation-independent O-methyltransferase family. Homodimer. Homotetramer in solution. Tetramers might not be very stable in solution.

It catalyses the reaction 15-demethylaclacinomycin T + AH2 + O2 = 10-decarboxymethylaclacinomycin T + A + CO2 + H2O. It carries out the reaction 10-carboxy-13-deoxycarminomycin + AH2 + O2 + H(+) = 10-hydroxy-13-deoxycarminomycin + A + CO2 + H2O. The enzyme catalyses 10-hydroxy-13-deoxycarminomycin + S-adenosyl-L-methionine = 10-hydroxy-13-deoxydaunorubicin + S-adenosyl-L-homocysteine + H(+). The protein operates within antibiotic biosynthesis; rhodomycin biosynthesis. It participates in antibiotic biosynthesis; aclacinomycin biosynthesis. With respect to regulation, the hydroxylation reaction requires S-adenosyl-L-methionine (SAM) as a cofactor. S-adenosine-L-homocysteine and sinefungin (a SAM analog) can also support the decarboxylative hydroxylation activity with 10-carboxy-13-deoxycarminomycin as substrate. SAM and its analogs are considered an essential structural ligand to maintain ternary structural integrity and the proper binding mode and orientation of electron-rich substrates during decarboxylative hydroxylation of C-10 by RdmB. Its function is as follows. Involved in the biosynthesis of anthracyclines, an important group of aromatic polyketide antibiotics used in cancer chemotherapy. Acts as a 10-hydroxylase to catalyze a decarboxylative hydroxylation reaction on anthracyclines. During biosynthesis of rhodomycin, it catalyzes the removal of the carboxylic group at the C-10 position of 15-demethoxy-epsilon-rhodomycin coupled to hydroxylation at the same C-10 position to yield beta-rhodomycin. In vitro, can also catalyze the removal of the carboxylic group at the C-10 position of 15-demethoxyaclacinomycin T coupled to hydroxylation at the same C-10 position to yield 10-decarboxymethylaclacinomycin T. It can also use 10-carboxy-13-deoxycarminomycin, an analog of 15-demethoxy-epsilon-rhodomycin, to yield 10-hydroxy-13-deoxycarminomycin. In terms of biological role, in addition to its hydroxylation activity, it can act in vitro as a S-adenosyl-L-methionine-dependent O-methyltransferase and catalyze the 4-O-methylation of 10-hydroxy-13-deoxycarminomycin to 10-hydroxy-13-deoxydaunorubicin. The triglycosyl group of anthracyclines prevents the methylation reaction. The polypeptide is Aclacinomycin 10-hydroxylase RdmB (Streptomyces purpurascens).